Reading from the N-terminus, the 113-residue chain is UPF0482 protein KPK_2871 (113 aa).

A signal peptide spans Met1–Ala28. The interval Gly38–Arg61 is disordered. Polar residues predominate over residues Asp39 to Ser48. The span at Met49–Ser59 shows a compositional bias: basic and acidic residues.

Belongs to the UPF0482 family.

The chain is UPF0482 protein KPK_2871 from Klebsiella pneumoniae (strain 342).